The sequence spans 292 residues: Undecaprenyl-diphosphatase (292 aa).

5 helical membrane-spanning segments follow: residues 87–107 (MGWY…LFEE), 113–133 (FRDL…LGMV), 190–210 (AFLL…KDIG), 219–239 (ATIV…AWFM), and 250–270 (FVYY…FGVL).

This sequence belongs to the UppP family.

It localises to the cell membrane. The catalysed reaction is di-trans,octa-cis-undecaprenyl diphosphate + H2O = di-trans,octa-cis-undecaprenyl phosphate + phosphate + H(+). Catalyzes the dephosphorylation of undecaprenyl diphosphate (UPP). Confers resistance to bacitracin. The protein is Undecaprenyl-diphosphatase of Thermobifida fusca (strain YX).